Reading from the N-terminus, the 187-residue chain is Elongation factor P (187 aa).

Belongs to the elongation factor P family.

The protein localises to the cytoplasm. Its pathway is protein biosynthesis; polypeptide chain elongation. In terms of biological role, involved in peptide bond synthesis. Stimulates efficient translation and peptide-bond synthesis on native or reconstituted 70S ribosomes in vitro. Probably functions indirectly by altering the affinity of the ribosome for aminoacyl-tRNA, thus increasing their reactivity as acceptors for peptidyl transferase. The chain is Elongation factor P from Flavobacterium psychrophilum (strain ATCC 49511 / DSM 21280 / CIP 103535 / JIP02/86).